We begin with the raw amino-acid sequence, 83 residues long: Putative membrane protein insertion efficiency factor (83 aa).

A disordered region spans residues 62–83 (KGGYDPVPPKSVKSAGNSKDSK).

It belongs to the UPF0161 family.

Its subcellular location is the cell inner membrane. Functionally, could be involved in insertion of integral membrane proteins into the membrane. The chain is Putative membrane protein insertion efficiency factor from Chlorobaculum tepidum (strain ATCC 49652 / DSM 12025 / NBRC 103806 / TLS) (Chlorobium tepidum).